The chain runs to 313 residues: uncharacterized protein (313 aa).

The region spanning Lys-2–Gly-57 is the HTH deoR-type domain. The H-T-H motif DNA-binding region spans Val-19–Asp-38. The WYL domain occupies His-131–Phe-210.

Its subcellular location is the cytoplasm. This is an uncharacterized protein from Bacillus subtilis (strain 168).